The chain runs to 316 residues: Phospho-N-acetylmuramoyl-pentapeptide-transferase (316 aa).

Transmembrane regions (helical) follow at residues 5–25, 49–69, 76–96, 116–136, 141–161, 172–192, 195–212, 221–241, 244–264, and 296–316; these read IILA…LFIP, GTPT…TLIF, LAIL…DDFL, FLLA…EVIF, TTID…VGTV, GLAA…ALFL, ITYG…LGFL, IFMG…AAVL, LPLI…SVII, and VVYA…YSLS.

It belongs to the glycosyltransferase 4 family. MraY subfamily. Requires Mg(2+) as cofactor.

The protein resides in the cell membrane. It catalyses the reaction UDP-N-acetyl-alpha-D-muramoyl-L-alanyl-gamma-D-glutamyl-meso-2,6-diaminopimeloyl-D-alanyl-D-alanine + di-trans,octa-cis-undecaprenyl phosphate = di-trans,octa-cis-undecaprenyl diphospho-N-acetyl-alpha-D-muramoyl-L-alanyl-D-glutamyl-meso-2,6-diaminopimeloyl-D-alanyl-D-alanine + UMP. It functions in the pathway cell wall biogenesis; peptidoglycan biosynthesis. Its function is as follows. Catalyzes the initial step of the lipid cycle reactions in the biosynthesis of the cell wall peptidoglycan: transfers peptidoglycan precursor phospho-MurNAc-pentapeptide from UDP-MurNAc-pentapeptide onto the lipid carrier undecaprenyl phosphate, yielding undecaprenyl-pyrophosphoryl-MurNAc-pentapeptide, known as lipid I. The protein is Phospho-N-acetylmuramoyl-pentapeptide-transferase of Thermoanaerobacter pseudethanolicus (strain ATCC 33223 / 39E) (Clostridium thermohydrosulfuricum).